Reading from the N-terminus, the 617-residue chain is Probable Xaa-Pro aminopeptidase P (617 aa).

Positions 414, 425, 523, and 537 each coordinate Mn(2+).

It belongs to the peptidase M24B family. Mn(2+) is required as a cofactor.

The enzyme catalyses Release of any N-terminal amino acid, including proline, that is linked to proline, even from a dipeptide or tripeptide.. Functionally, catalyzes the removal of a penultimate prolyl residue from the N-termini of peptides. In Ajellomyces dermatitidis (strain ER-3 / ATCC MYA-2586) (Blastomyces dermatitidis), this protein is Probable Xaa-Pro aminopeptidase P (AMPP).